The following is a 289-amino-acid chain: Ferri-bacillibactin esterase BesA (289 aa).

Active-site charge relay system residues include S163, E225, and H263.

The protein belongs to the esterase D family.

The protein localises to the cytoplasm. In terms of biological role, catalyzes the hydrolysis of the trilactone cycle of ferri-bacillibactin (ferri-BB) complex, leading to the formation of bacillibactin monomers and to cytosolic iron release, thus making iron available for metabolic use. Can also hydrolyze bacillibactin (BB), however the catalytic efficiency for ferri-BB hydrolysis is much higher than for BB. The protein is Ferri-bacillibactin esterase BesA (besA) of Bacillus subtilis (strain 168).